Here is a 440-residue protein sequence, read N- to C-terminus: ATP-dependent protease ATPase subunit HslU (440 aa).

ATP is bound by residues isoleucine 18 and 60 to 65 (GVGKTE). Residues 138 to 159 (RAQSFDQEDPSAGTRQKLRKKL) are disordered. Aspartate 252, glutamate 318, and arginine 390 together coordinate ATP.

The protein belongs to the ClpX chaperone family. HslU subfamily. In terms of assembly, a double ring-shaped homohexamer of HslV is capped on each side by a ring-shaped HslU homohexamer. The assembly of the HslU/HslV complex is dependent on binding of ATP.

Its subcellular location is the cytoplasm. Functionally, ATPase subunit of a proteasome-like degradation complex; this subunit has chaperone activity. The binding of ATP and its subsequent hydrolysis by HslU are essential for unfolding of protein substrates subsequently hydrolyzed by HslV. HslU recognizes the N-terminal part of its protein substrates and unfolds these before they are guided to HslV for hydrolysis. This chain is ATP-dependent protease ATPase subunit HslU, found in Alkalilimnicola ehrlichii (strain ATCC BAA-1101 / DSM 17681 / MLHE-1).